We begin with the raw amino-acid sequence, 5087 residues long: MDSFLCDRYTQFPSLNYGAEDVPSQASATWELDNVTDLNRLILAWASILSRLSEEESPVIQIDGAAARIHLESGRIESVQIEKSGNSGSRTAILTSDTPITSERCQLEIRYTPHQLHGSITSRGCTSVRYLDQLARNLESLLREPLPLSIVNPTPLILPGPRLFHEMVRHTGNEPAISFLNESGEVEDLSYEMLHSLSEQLASHLVHILASLPPPGQHGKIIPVLLPQSLDLYVAWLAILKAGAAVCPLNLDTPSERLNFIVGDVDARVVVTNEGLTSAFQNIETSITIVKMEEIKTFAPGCLSSVDVCNEDLAYVMYTSGSTGLPKGVGISHQAAVQALLAHDEIIPGFRRFLQFAAPTFDVSVFEIFFPLFRGVTLVGCNRRLMLNDLPGIINQLNIDAAELTPTVCGELLQSRDAVPCLKLLLTIGEMLTRHVVDEFGSSKDRPGLLHGMYGPTEATIHCTAVSSVRAGSLVGNIGTPFKTVSAFIISMDHIVGQEPVILPVGHVGELVVGGPQLARYYLNRPTENRNAFIDSKTYGRLYRTGDKARLHPNGELQCMGRISTGQVKLRGQRIELGEIENVLLKNQYVRNVAACVIQGALVAFLSADVAHCTSRDLQLTCRRSLPKFMIPGNFVILNKLPRLPSGKIDRKGLEAEYILSKGVDQTDLAEPAGDIEQKISVSLNLLLESSLTPTASLASAGLDSLRAIHLASSLRKEGVFLNALDILEADSIRKMAALVLKSQPEVTVIPTESEPLKMWNTIIQQGHEMLKLTENLQQPTDIIPCSPIQTGMLLETKLNPKAYFNSVELQFDRGISLEDVKSAFLSTALQNEVLRSGFIEIDFPGFPYAQVVWESLHPDQIIESKIFDHNLELQNQWDILHPLRVQLCVIDGQPKALVHIHHSLYDGWSWDQIMRDLVSALENKQLTQRPQYRLFTLFHINNHSSEIREQALNYWRSHLQGSTPCLWPNFQDRSDLPKVTQVVERQFNVDIDQLDSFVRDFRISRQTIFQAAIGYLLSAYNGTSDIILGNVSAGRTLPIDGIESIVGPCISTLPLRLNLQKARTVRDLLAILHGLNRKSLVHGFVPLRDVKQVSGINTADQLFDTLFVWQDNFTTVCGPIAQVTSRDFLEFTLTTELGIQDGKIWAKATFEESILPESHVVIFLKQIESIAMTFLESADRLLEDIPFHLPESLLSMENNFPPPLKSVPGLSDSVEELAKTDSERIAVEFLDSLDPETGDRAIKTLTYSELDAQSNKLAGQLRNLGVVEGNLVAICLEKSLELYISILAVIKAGAGYVPITPQTPIMRMKHIIQQASCRICIADSEIQAELSDVPNTTAMLAKPQILVENALYEFPKAPGSCPAYAVFTSGTTGTPKGVLISRFNLESNIAVLSALYPDFPESRLLQACSHAFDVSVFEIFFAWSRGMTLCSAKNDVLFRDIELAIRKMRITHLSMTPTVAALVRANNVPLVKFLVTAGEALTPKVRMDWAGKGLWQGYGPSETTNICTVKPNICMSHFISNIGRPLPNTSVFVLAEGERFSLVPRGAVGELCFGGDQVGIGYLNMEDLTRQKFLIHEAYGRIYKSGDYGRLLPDGSIAFVGRRDDLVKIRGQRIELGEITSVLMTHENVKDCATIVCDSNNGDSGDSKQLISFWVPDNINIDGLGQHENSHIFQQLFDYIGDHLPSYMIPSFLIPISHIPMTTIGRKIDKEALKYMYLSANPTLLDVYSRGKEEEHTQENLTDNEAKVAGLVAQVTGVSTKEIGRHTSFYRLGFDSVIAIALSRELKLAGFGQIDISVIMKNDSIARLTRKISQSIEAQMPSLESIPTFDHLFSRELIRKIKDEASSHGVNVTKILPCTSLQEGMLSGISTGNDASYYNHLVFEINRNIELLKTAWMKMVARHDILRTWFRQTDDARFPFVQVVLERLDIAWQSIECPIADAPSTLEKSKLAVAVKEGPHSLYSFTVLQCVDSPKVFLLLSIHHALYDGEAMEVLLQEVQECLLEHQLPPVVPFDLYLHEMIKVNSDSTDQFWSNYLKDFTPTLFTSPSSLVKGSPKMSRSTSHIPSSSFTEVCNACKSSSVTTLSLLQAAWSRLICLLSGSPDICFGDVVNCRSIPIDGAQRIVGPCFNTLPVRTSLNGNMTNIDLMRNLQSNRAATLPYQLSSMRRIQSRFSQRGQRIFDSLLLLQGRPLQLNESLWRMVSENGVMDFPIIFEIIPHPESDSLQFIFHFDEGLVPTTDIDTITACYHAILNHTLRFPEARVMDFSLVESDGQVSGGLSVFRKLGEANGDHKSNGYGKSEEWSAESLEIRNLLSAMSKIDKKRINMDTTIFELGLDSINAIQIAGHFRKVGYEISAADILEGPSIREIASVLQGSKSSPCVGLALHNFDFDSFQSLHLPSICDKLGLLESSVEAIRPCTTPQAGMLASFINSEGLLYFNSFTLKSPTPLNLIALRFVWESVMERNEMLRTGFCEVKDDIFPFAMVTYRPGIIELPWNECLSPSKRMSDARHEQHLNGKSILNQLHRPPWFLTVKPCSDSTLMQLSAHHALYDAHSMNLILSEVINVYNGSTLPPAIPVSSVLGFIVEKFQSPESESYWSEVGPSFSATKFPDMNPLHAKVNDTRFLSRDCSFTMEKLQKGCRELGVTLQAVGQAAWSRILSSYVGESNVTYGLVLSGRDISEQAQDTAFPCLTTVPAHQNVEATNRELLQQIMKSNAMAVKYQFTSLTKIQRLSKADSPLFDTLFVFQKLASTDKQQPLWDVVEESSQTEYSVSLELIPSSDTLKLALTYQNHILPDGQASLLLDELDWLLTHILQYPDSTSSSLDTASRSIVSVLPRKDSKIDCPTQLLHEFVEVGATRHPSRVALEFAERINGKLITQSWTYKDLDEQGNRYANLLHHLGVKQGTLVGVSFQKCPEAYFSILGVLKVGCAFLAIDPSAPIARKQFILDDSKADILMCGMEQQDELKSLTGIRLVPVNEEGLLDGVNSTPPTLSFPLHGDATCYCLYTSGSTGTPKGCEITHDNAVQAMLSFQRLFGGHWDESSRWFQFASFHFDVSVLEQYWTWSVGICLTSCPRDTLFEDFAGTLRDLSITHIDLTPSLAQLIQPEDVPSLCRGVFITGGEKLKQEILEQWGPHEVIYNGYGPTEVTIGCTMLPRVTSSDKPTNIGPQFDNVSGYVFKQGTNTPVLRGGIGELCVSGPLVGKGYLNRPQLTAEKFQYIETYGERVYRTGDLVRMMHDESFCFLGRIDDQVKLRGQRLEINEINHVIKNSTEEVGDVVTMVLKHPTATKEQIVSFTTVVTSASTAACPEVDFSPEAGRVLEAIRSECRSHLPGYMIPTHIIPLTRFPLSSNNKIDNGQLRGIFASMLLSEMQALSSHEQESPTEDTDTIRKIIPILSRFTKVEEKTISSSSNIFELGLDSILVISFSRALREAGCPAAHPSVVMKCSTLSLLAKAVESPDNNVEGERRQYEDAKQKIAAFAHMHMSHLANELEVAPQDIEAITPCTSLQDGMLYQCLRNESHPYLTSFTFQLAPHTDIPMLKEAWKRAQVSFQLLRTKFPLTDDGYALVVLKEAALPWFEFAISKDDELESTAESYFKEWNLGFNNFMGRVWEIGIISSPKRRWMCLNIFHGLYDGISLPIILDAVKHVYNGGQMPRSMPFTEVLPLGPLRTVPAAKSFWAKHLENLSQTTIPRRSLPEPGSRTSTIRIEGFHCIEETRRSLNVTEKAMFHACWVYTFERYFNYIPTMGIVVSGRSFDSEDADVAVGPLFNTIPCNIPKFSFSTFSELIQACHDYSVSALPFQHTPLRSIMKWIGRSSQRPLFDVLFVFQKQENITSQSGESLWEPVASFTEADYPLALEVQSQGSGSFQVTAACQGDILTSDGISDLLEQFRLSLRSLVEEPFSNLSFSGNSTSLEASSKQIANKVIGGPSPNVTTSFQWSQAASLLRQEIAKLANLDVSEINEDSSVLEVGLDSIDAIKLSSRLKRDHIDLSVGNIMRNRTIRTMMAEVTVNGSATKADLTYLKSLESQLRRSLEEDGKDLGDIEHIYPATPLQEGMINEMLSSDGLHYFNHDILQISEDVDVTMLKNAWETIAKRHPILRTSFATVSDPNLPFSYAQLIHKSSIKIDWDIVDIAENSIESILQEERARALSLVMSKPLFNLRLIRDGAKLLLILSLPHAMYDGWSLTLLHQDVASAYSGQFSARPSYQHVLEDIISSSRDEGLQFWKGVLSDAEPSIFPPQPGAGDQGALVHRDETASDIPLSHVLNFCKAHGVTAQALGLTCWTIVLASYLGQLDVLFGTVMLGRDTEEASKVAFPTMNTVAVRGILHGSVSEMLEYVQRNLGNMLAHQHYPLRKIKSMMGVGNKDLFDTLFIYQKSPSSQEGQDKPLYKSINSSSSVEYSICVELEAIDDSAVWRVACKDTILGKKDTSQLVLQLLQVFKTIIQSPEIPTAGFVEVRERPTLDSVTQNGGSLPDGPGGIAIEPVVWSLLEERIRDTLSLVAAVPKEEITRNTTIFHFGIDSISAIKVSSLLRRQSVLISVRDILRAETVGKMAEIVNSAREKKPTTATSREKLLSLQTLKNSNIDLQLRKYGMKREDVEVFLPATAGQVYMLETWKNSHGKLFFPDFFYRVTGRITQSQLDNAWKVMTAKLPILRTTILSIGDTGMPYVLAELKQVSNPIIWRSDLRVKSNRRHVAARQGSGLVYLYASQTETETLLMLHIHHALYDAVALQHLINILESLFQDVSTPVNTPVDIAEFIQYGKAMSSEAQQEAFWKGYLGNDITPVAKKGSGPVMDVQAGAGKYQPGLLDNTDWLNKICQAEGLSVQAVFLAAYSKVHVREFHVRGADLTVGVYLANRSHDLVGLPELVAPTLNIVPLRIQDPGSRSVFELARIIQSDLHEIGSAENCTVSLAQIAEWTGIRLDTTVNFIKLPEVAAQVSTATSGAPQLVQVTEEEVLEWLSKESCNSNGSEQVDAAAKGSSSKLWLEEMLGIESGVGLENAGDVYKVSPPGSQLSQDSPEKQEANNKPSPQPSVDIEAAVRNNTLDVGVFGPSSDKALGVLDGVRRELLALQTSSAR.

Positions 165 to 563 (HEMVRHTGNE…NGELQCMGRI (399 aa)) are adenylation 1. Residues 671–744 (EPAGDIEQKI…KMAALVLKSQ (74 aa)) enclose the Carrier 1 domain. An O-(pantetheine 4'-phosphoryl)serine modification is found at Ser-705. The tract at residues 782-1112 (DIIPCSPIQT…LFDTLFVWQD (331 aa)) is condensation 1. The adenylation 2 stretch occupies residues 1217-1611 (ELAKTDSERI…GRRDDLVKIR (395 aa)). Residues 1740-1817 (ENLTDNEAKV…RLTRKISQSI (78 aa)) form the Carrier 2 domain. Ser-1777 bears the O-(pantetheine 4'-phosphoryl)serine mark. Residues 1855–2272 (KILPCTSLQE…RVMDFSLVES (418 aa)) form a condensation 2 region. In terms of domain architecture, Carrier 3 spans 2302-2378 (EEWSAESLEI…EIASVLQGSK (77 aa)). Ser-2339 is subject to O-(pantetheine 4'-phosphoryl)serine. The tract at residues 2419–2831 (PCTTPQAGML…STSSSLDTAS (413 aa)) is condensation 3. The interval 2860–3258 (ATRHPSRVAL…GRIDDQVKLR (399 aa)) is adenylation 3. One can recognise a Carrier 4 domain in the interval 3387 to 3464 (TEDTDTIRKI…LLAKAVESPD (78 aa)). Residue Ser-3424 is modified to O-(pantetheine 4'-phosphoryl)serine. The segment at 3506 to 3910 (ITPCTSLQDG…RSLVEEPFSN (405 aa)) is condensation 4. Residues 3943–4019 (FQWSQAASLL…TMMAEVTVNG (77 aa)) enclose the Carrier 5 domain. Ser-3980 carries the post-translational modification O-(pantetheine 4'-phosphoryl)serine. The interval 4051 to 4416 (EHIYPATPLQ…EYSICVELEA (366 aa)) is condensation 5. Residues 4496–4569 (SLLEERIRDT…KMAEIVNSAR (74 aa)) form the Carrier 6 domain. Ser-4530 is modified (O-(pantetheine 4'-phosphoryl)serine). A condensation 6 region spans residues 4610–4913 (FLPATAGQVY…IQSDLHEIGS (304 aa)). Positions 5013–5048 (DVYKVSPPGSQLSQDSPEKQEANNKPSPQPSVDIEA) are disordered.

Belongs to the NRP synthetase family.

It functions in the pathway siderophore biosynthesis. Functionally, nonribosomal peptide synthetase; part of the siderophore biosynthetic pathway. Arthroderma benhamiae produces 2 types of extracellular siderophores, ferrichrome C and ferricrocin. The biosynthesis of these siderophores depends on the hydroxylation of ornithine to N(5)-hydroxyornithine, catalyzed by the monooxygenase sidA. The structure of ferricrocin differs from ferrichrome C only by a serine for alanine substitution and the assembly of both siderophores is suggested to be performed by the nonribosomal peptide synthase (NRPS) sidC. The protein is Nonribosomal peptide synthetase sidC of Arthroderma benhamiae (strain ATCC MYA-4681 / CBS 112371) (Trichophyton mentagrophytes).